A 289-amino-acid chain; its full sequence is Bidirectional sugar transporter SWEET10 (289 aa).

Residues M1 to Q5 lie on the Extracellular side of the membrane. Residues A6–A26 traverse the membrane as a helical segment. The region spanning V11–K96 is the MtN3/slv 1 domain. Topologically, residues P27 to Y43 are cytoplasmic. A helical membrane pass occupies residues Q44–I64. Over K65–M70 the chain is Extracellular. A helical transmembrane segment spans residues L71–F91. The Cytoplasmic portion of the chain corresponds to Y92–K103. The chain crosses the membrane as a helical span at residues F104–I124. The Extracellular portion of the chain corresponds to H125 to Q131. In terms of domain architecture, MtN3/slv 2 spans Q131 to K214. The chain crosses the membrane as a helical span at residues V132–I152. At R153–P165 the chain is on the cytoplasmic side. A helical transmembrane segment spans residues F166–L186. The Extracellular segment spans residues K187–N190. A helical membrane pass occupies residues I191 to I211. Over Y212–N289 the chain is Cytoplasmic.

Belongs to the SWEET sugar transporter family. As to quaternary structure, forms heterooligomers with SWEET8.

Its subcellular location is the cell membrane. Its function is as follows. Mediates both low-affinity uptake and efflux of sugar across the plasma membrane. This chain is Bidirectional sugar transporter SWEET10, found in Arabidopsis thaliana (Mouse-ear cress).